The following is a 101-amino-acid chain: Small ribosomal subunit protein uS14 (101 aa).

Belongs to the universal ribosomal protein uS14 family. As to quaternary structure, part of the 30S ribosomal subunit. Contacts proteins S3 and S10.

Its function is as follows. Binds 16S rRNA, required for the assembly of 30S particles and may also be responsible for determining the conformation of the 16S rRNA at the A site. This chain is Small ribosomal subunit protein uS14, found in Gluconacetobacter diazotrophicus (strain ATCC 49037 / DSM 5601 / CCUG 37298 / CIP 103539 / LMG 7603 / PAl5).